Here is a 278-residue protein sequence, read N- to C-terminus: ATPase SWSAP1 (278 aa).

Residues 237–278 (SPEKKDSSAGSQSLTLGCDNLPGPGSPLDGILTSETGADSKT) form a disordered region. Positions 269–278 (TSETGADSKT) are enriched in polar residues.

Interacts with ZSWIM7; they form a functional complex involved in homologous recombination repair and stabilize each other. Interacts with RAD51, RAD51B, RAD51C, RAD51D and XRCC3; involved in homologous recombination repair.

Its subcellular location is the nucleus. Its function is as follows. ATPase which is preferentially stimulated by single-stranded DNA and is involved in homologous recombination repair (HRR). Has a DNA-binding activity which is independent of its ATPase activity. The chain is ATPase SWSAP1 (Swsap1) from Mus musculus (Mouse).